The sequence spans 1162 residues: Glycerophosphocholine phosphodiesterase GDE1 (1162 aa).

One can recognise an SPX domain in the interval 1–155; the sequence is MKFGKTYVTH…TSILSQHSGV (155 aa). ANK repeat units follow at residues 346-375, 392-421, 423-452, 458-487, 492-521, and 525-554; these read YHRTPLHYASQYGLVEVTRYLVEFGVKWGL, EGLTPLHLSIIGKHPKTTETLLGFNKAQTL, CPNLLLLAVRLNSPQILNSLIVEGNIDVNY, RNETALYIASKLNHPDLVEFLLESNANTEI, FGWTPIFIAASEGFMTIVKLLKEYGASYDI, and SGWLPMEHACLRGHLDVTDLLLPKNEKLLL. One can recognise a GP-PDE domain in the interval 817–1146; that stretch reads TRVIGHRGLG…DSVLAVREGL (330 aa).

Belongs to the GDE1 family.

It localises to the cytoplasm. It carries out the reaction sn-glycerol 3-phosphocholine + H2O = sn-glycerol 3-phosphate + choline + H(+). Its function is as follows. Glycerophosphocholine glycerophosphodiesterase responsible for the hydrolysis of intracellular glycerophosphocholine into glycerol-phosphate and choline. The choline is used for phosphatidyl-choline synthesis. Required for utilization of glycerophosphocholine as phosphate source. C.albicans can utilize GroPCho through transport and intracellular hydrolysis or through extracellular hydrolysis. This Candida albicans (strain SC5314 / ATCC MYA-2876) (Yeast) protein is Glycerophosphocholine phosphodiesterase GDE1.